Consider the following 117-residue polypeptide: UPF0342 protein BLi01058/BL02870 (117 aa).

Belongs to the UPF0342 family.

The chain is UPF0342 protein BLi01058/BL02870 from Bacillus licheniformis (strain ATCC 14580 / DSM 13 / JCM 2505 / CCUG 7422 / NBRC 12200 / NCIMB 9375 / NCTC 10341 / NRRL NRS-1264 / Gibson 46).